Reading from the N-terminus, the 1032-residue chain is uncharacterized protein (1032 aa).

3 disordered regions span residues 54–80 (NNNNNNNNNNNNNNNNNNNNNNNNNNN), 391–451 (QLQI…QTHL), and 884–934 (INNE…SKVK). Positions 884–907 (INNENNNENNNNYNGNINSNNNNN) are enriched in low complexity.

This is an uncharacterized protein from Dictyostelium discoideum (Social amoeba).